The primary structure comprises 141 residues: Nucleoside triphosphatase NudI (141 aa).

The region spanning 1–141 (MRQRTIVCPL…RVTLSQKGLL (141 aa)) is the Nudix hydrolase domain. Residues 38–59 (GGVEPVERIEEALRREIREELG) carry the Nudix box motif.

It belongs to the Nudix hydrolase family. NudI subfamily. Monomer. Mg(2+) is required as a cofactor.

The catalysed reaction is a ribonucleoside 5'-triphosphate + H2O = a ribonucleoside 5'-phosphate + diphosphate + H(+). The enzyme catalyses a 2'-deoxyribonucleoside 5'-triphosphate + H2O = a 2'-deoxyribonucleoside 5'-phosphate + diphosphate + H(+). It catalyses the reaction dUTP + H2O = dUMP + diphosphate + H(+). It carries out the reaction dTTP + H2O = dTMP + diphosphate + H(+). The catalysed reaction is dCTP + H2O = dCMP + diphosphate + H(+). In terms of biological role, catalyzes the hydrolysis of nucleoside triphosphates, with a preference for pyrimidine deoxynucleoside triphosphates (dUTP, dTTP and dCTP). The sequence is that of Nucleoside triphosphatase NudI from Klebsiella pneumoniae (strain 342).